The primary structure comprises 380 residues: 3-dehydroquinate synthase (380 aa).

Belongs to the archaeal-type DHQ synthase family.

It carries out the reaction 2-amino-2,3,7-trideoxy-D-lyxo-hept-6-ulosonate + NAD(+) + H2O = 3-dehydroquinate + NH4(+) + NADH + H(+). Its function is as follows. Catalyzes the oxidative deamination and cyclization of 2-amino-3,7-dideoxy-D-threo-hept-6-ulosonic acid (ADH) to yield 3-dehydroquinate (DHQ), which is fed into the canonical shikimic pathway of aromatic amino acid biosynthesis. This chain is 3-dehydroquinate synthase, found in Methanosarcina barkeri (strain Fusaro / DSM 804).